A 229-amino-acid polypeptide reads, in one-letter code: Ribosome maturation factor RimM (229 aa).

A disordered region spans residues 1-37; sequence MAGHDSGNAKRGRSPSFGVFVRKPVERTSAKGTSDGA. The PRC barrel domain maps to 148-229; it reads ADEFYWVDLI…RVVVDWEADY (82 aa).

Belongs to the RimM family. Binds ribosomal protein uS19.

The protein resides in the cytoplasm. An accessory protein needed during the final step in the assembly of 30S ribosomal subunit, possibly for assembly of the head region. Essential for efficient processing of 16S rRNA. May be needed both before and after RbfA during the maturation of 16S rRNA. It has affinity for free ribosomal 30S subunits but not for 70S ribosomes. The chain is Ribosome maturation factor RimM from Burkholderia pseudomallei (strain 668).